The chain runs to 456 residues: Armadillo repeat-containing X-linked protein 1 (456 aa).

At 1-6 (MGRTRE) the chain is on the mitochondrial intermembrane side. Mitochondrion outer membrane (MOM)-targeting sequence regions lie at residues 1-6 (MGRTRE) and 26-36 (RLTWGKDENEK). Residues 7 to 29 (AGCVAAGMVIGAGACYCVYRLTW) traverse the membrane as a helical; Signal-anchor segment. Topologically, residues 30 to 456 (GKDENEKLWD…VKVLKVLTKL (427 aa)) are cytoplasmic. Disordered stretches follow at residues 37–106 (LWDE…SGGG) and 139–186 (RTLT…APAT). A compositionally biased stretch (acidic residues) spans 38–50 (WDEEEEEEEEEEE). 2 stretches are compositionally biased toward basic and acidic residues: residues 51–62 (KSCSDKTEKELK) and 72–81 (KPQDDSKSKV). The segment covering 162–180 (SRARNRTSGKVKRKNRSKS) has biased composition (basic residues). ARM repeat units lie at residues 198 to 238 (PYKI…NNAA), 240 to 279 (SFNQNAIRELGGVPIIAKLIKTRDPIIREKTYNALNNLSV), 361 to 401 (PAMT…NIND), and 418 to 456 (SSLFFLFKESGVCVKKIKALASHKDLVVKVKVLKVLTKL).

This sequence belongs to the eutherian X-chromosome-specific Armcx family. Interacts with MIRO1. Widely expressed in the adult nervous tissue, especially in the forebrain, including the cerebral cortex, hippocampus and thalamus.

It localises to the mitochondrion. The protein localises to the mitochondrion outer membrane. Functionally, regulates mitochondrial transport during axon regeneration. Increases the proportion of motile mitochondria by recruiting stationary mitochondria into the motile pool. Enhances mitochondria movement and neurite growth in both adult axons and embryonic neurons. Promotes neuronal survival and axon regeneration after nerve injury. May link mitochondria to the Trak1-kinesin motor complex via its interaction with Miro1. The protein is Armadillo repeat-containing X-linked protein 1 (Armcx1) of Mus musculus (Mouse).